Reading from the N-terminus, the 158-residue chain is Urease accessory protein UreE (158 aa).

Belongs to the UreE family.

Its subcellular location is the cytoplasm. Its function is as follows. Involved in urease metallocenter assembly. Binds nickel. Probably functions as a nickel donor during metallocenter assembly. This Corynebacterium urealyticum (strain ATCC 43042 / DSM 7109) protein is Urease accessory protein UreE.